An 822-amino-acid chain; its full sequence is Calpain-3 (822 aa).

Residues 1 to 36 (MPTVISASVAPRTGAEPMSPGPIAQAAQDKGTEAGG) form a disordered region. Residues 74–418 (LFVDPEFPPD…FTKLEICNLT (345 aa)) form the Calpain catalytic domain. Residues C129, H335, and N359 contribute to the active site. Residues 419-587 (ADALESDKLQ…KRNLSEEVEN (169 aa)) form a domain III region. A linker region spans residues 588–650 (TISVDRPVKK…EPGNTDQESE (63 aa)). A disordered region spans residues 604–652 (IFVSDRANSNKELGVDQETEEGKDNTSPDKQAKSPQLEPGNTDQESEEQ). Basic and acidic residues predominate over residues 623–635 (EEGKDNTSPDKQA). EF-hand domains lie at 650–684 (EEQR…VVNK), 693–726 (FTLE…KKIK), 723–758 (KKIK…AGFH), and 788–822 (VRLE…TMYA). A domain IV region spans residues 651-822 (EQRQFRNIFR…LEWLQLTMYA (172 aa)). Positions 663, 666, 668, 673, 706, 708, 710, 712, 717, 736, 738, 740, 742, 747, 801, 803, 805, and 807 each coordinate Ca(2+).

Belongs to the peptidase C2 family. As to quaternary structure, homodimer; via EF-hand domain 4. Interacts with TTN/titin. Interacts with CMYA5; this interaction, which results in CMYA5 proteolysis, may protect CAPN3 from autolysis. Interacts with SIMC1. Interacts with UTP25; the interaction is required for CAPN3 translocation to the nucleolus. As to expression, skeletal muscle.

It is found in the cytoplasm. The protein localises to the nucleus. It localises to the nucleolus. The catalysed reaction is Broad endopeptidase activity.. With respect to regulation, activated by micromolar concentrations of calcium and inhibited by calpastatin. Its function is as follows. Calcium-regulated non-lysosomal thiol-protease. Proteolytically cleaves CTBP1. Mediates, with UTP25, the proteasome-independent degradation of p53/TP53. This chain is Calpain-3 (CAPN3), found in Bos taurus (Bovine).